The following is a 375-amino-acid chain: Growth/differentiation factor 8 (375 aa).

The N-terminal stretch at 1–23 (MQKLQIFVYIYLFMLLVAGPVDL) is a signal peptide. Positions 24–266 (NENSEQKENV…VTDTPKRSRR (243 aa)) are excised as a propeptide. Residues asparagine 48 and asparagine 71 are each glycosylated (N-linked (GlcNAc...) asparagine). Intrachain disulfides connect cysteine 272–cysteine 282, cysteine 281–cysteine 340, cysteine 309–cysteine 372, and cysteine 313–cysteine 374.

It belongs to the TGF-beta family. In terms of assembly, homodimer; disulfide-linked. Interacts with WFIKKN2, leading to inhibit its activity. Interacts with FSTL3. Synthesized as large precursor molecule that undergoes proteolytic cleavage to generate an N-terminal propeptide and a disulfide linked C-terminal dimer, which is the biologically active molecule. The circulating form consists of a latent complex of the C-terminal dimer and other proteins, including its propeptide, which maintain the C-terminal dimer in a latent, inactive state. Ligand activation requires additional cleavage of the prodomain by a tolloid-like metalloproteinase.

The protein resides in the secreted. Functionally, acts specifically as a negative regulator of skeletal muscle growth. The chain is Growth/differentiation factor 8 (MSTN) from Ovis aries (Sheep).